We begin with the raw amino-acid sequence, 243 residues long: ATP synthase subunit a, chloroplastic (243 aa).

5 helical membrane-spanning segments follow: residues 32–52, 91–111, 130–150, 195–215, and 216–236; these read AQVLITSWFVLGLLLGIALIA, IPFVGTLFLFIFVSNWSGALI, INTTVALALLTSVAYFYAGLN, LVVAVLVSLVPLVIPVPMMFL, and GLFTSGIQALIFATLAGAYIG.

Belongs to the ATPase A chain family. As to quaternary structure, F-type ATPases have 2 components, CF(1) - the catalytic core - and CF(0) - the membrane proton channel. CF(1) has five subunits: alpha(3), beta(3), gamma(1), delta(1), epsilon(1). CF(0) has four main subunits: a, b, b' and c.

The protein resides in the plastid. It localises to the chloroplast thylakoid membrane. Its function is as follows. Key component of the proton channel; it plays a direct role in the translocation of protons across the membrane. This Chaetosphaeridium globosum (Charophycean green alga) protein is ATP synthase subunit a, chloroplastic.